Here is a 761-residue protein sequence, read N- to C-terminus: 1,2-alpha-glucosylglycerol phosphorylase (761 aa).

A glycerol-binding site is contributed by 327–328; that stretch reads YQ. Position 333-334 (333-334) interacts with substrate; sequence WD. The Proton donor role is filled by Glu475. Residue 587 to 588 participates in substrate binding; it reads KQ.

It belongs to the glycosyl hydrolase 65 family. In terms of assembly, homodimer.

It carries out the reaction 2-O-(alpha-D-glucopyranosyl)glycerol + phosphate = beta-D-glucose 1-phosphate + glycerol. In terms of biological role, catalyzes both the (1) reversible phosphorolysis of 2-O-alpha-D-glucopyranosyl-sn-glycerol (GG) from beta-D-glucose 1-phosphate (betaGlc1P) and glycerol and (2) the hydrolysis of betaGlc1P. the betaGlc1P hydrolysis is a glucosyl-transfer reaction to an acceptor water molecule that produces an anomer-inverted alpha-glucose, not a phosphatase-type reaction. In the absence of glycerol produces alpha-D-glucopyranose and phosphate from beta-D-glucopyranose 1-phosphate. The sequence is that of 1,2-alpha-glucosylglycerol phosphorylase from Bacillus selenitireducens (strain ATCC 700615 / DSM 15326 / MLS10).